We begin with the raw amino-acid sequence, 70 residues long: Conotoxin Mr3.8 (70 aa).

The first 24 residues, 1–24 (MLKMGVVLFIFLVLFPLATLQLDA), serve as a signal peptide directing secretion. Positions 25-54 (DQPVERYAKNKQLFNPHKRRGIILRAPGKR) are excised as a propeptide. Cystine bridges form between Cys55–Cys67, Cys56–Cys68, and Cys61–Cys65.

It belongs to the conotoxin M superfamily. In terms of tissue distribution, expressed by the venom duct.

Its subcellular location is the secreted. In vitro, inhibits proliferation of the mice ovarian cancer cells ID8. This is Conotoxin Mr3.8 from Conus marmoreus (Marble cone).